Consider the following 167-residue polypeptide: Translationally-controlled tumor protein homolog (167 aa).

The region spanning Met1–Ile167 is the TCTP domain.

This sequence belongs to the TCTP family.

Its subcellular location is the cytoplasm. It is found in the cytoskeleton. Involved in protein synthesis. Involved in microtubule stabilization. This is Translationally-controlled tumor protein homolog (TMA19) from Candida albicans (strain SC5314 / ATCC MYA-2876) (Yeast).